A 476-amino-acid polypeptide reads, in one-letter code: Homeobox even-skipped homolog protein 2 (476 aa).

Disordered regions lie at residues 82 to 113 (TGSESTVSSEISSAAESRKKPGHYSEAAAEAD) and 142 to 185 (KGYA…GSGA). 2 stretches are compositionally biased toward low complexity: residues 84-96 (SESTVSSEISSAA) and 147-159 (SGSAAGTTTSASG). The span at 160-183 (SGLGSLHGGSGGSGGSAALGGSGS) shows a compositional bias: gly residues. The segment at residues 188–247 (VRRYRTAFTREQIARLEKEFYRENYVSRPRRCELAAALNLPETTIKVWFQNRRMKDKRQR) is a DNA-binding region (homeobox).

Belongs to the even-skipped homeobox family.

It localises to the nucleus. The sequence is that of Homeobox even-skipped homolog protein 2 (EVX2) from Homo sapiens (Human).